Reading from the N-terminus, the 448-residue chain is Probable glycine dehydrogenase (decarboxylating) subunit 1 (448 aa).

The protein belongs to the GcvP family. N-terminal subunit subfamily. In terms of assembly, the glycine cleavage system is composed of four proteins: P, T, L and H. In this organism, the P 'protein' is a heterodimer of two subunits.

The catalysed reaction is N(6)-[(R)-lipoyl]-L-lysyl-[glycine-cleavage complex H protein] + glycine + H(+) = N(6)-[(R)-S(8)-aminomethyldihydrolipoyl]-L-lysyl-[glycine-cleavage complex H protein] + CO2. Functionally, the glycine cleavage system catalyzes the degradation of glycine. The P protein binds the alpha-amino group of glycine through its pyridoxal phosphate cofactor; CO(2) is released and the remaining methylamine moiety is then transferred to the lipoamide cofactor of the H protein. In Listeria innocua serovar 6a (strain ATCC BAA-680 / CLIP 11262), this protein is Probable glycine dehydrogenase (decarboxylating) subunit 1.